The sequence spans 383 residues: Thioredoxin reductase 2 (383 aa).

FAD contacts are provided by residues 66–69 (SGPA), 87–88 (FE), 95–100 (IAPGGQ), asparagine 109, valine 142, cysteine 200, aspartate 345, and 352–354 (RQA). The cysteines at positions 197 and 200 are disulfide-linked.

The protein belongs to the class-II pyridine nucleotide-disulfide oxidoreductase family. As to quaternary structure, homodimer. FAD is required as a cofactor.

Its subcellular location is the cytoplasm. It is found in the mitochondrion matrix. It catalyses the reaction [thioredoxin]-dithiol + NADP(+) = [thioredoxin]-disulfide + NADPH + H(+). Possesses thioredoxin-disulfide reductase activity towards thioredoxins O1, O2 and F3. The sequence is that of Thioredoxin reductase 2 (NTR2) from Arabidopsis thaliana (Mouse-ear cress).